The following is a 389-amino-acid chain: Tubby-like F-box protein 11 (389 aa).

Residues 36 to 82 form the F-box domain; it reads DYRWSEIPEELLREILIRVEAADGGGWPSRRSVVACAGVCRGWRLLM. Residues 250 to 289 are disordered; it reads STMEPQGVASEPSEFPLLGTRSTLSRSQSKPLRSSSSHLK. Residues 273-286 are compositionally biased toward low complexity; sequence LSRSQSKPLRSSSS.

It belongs to the TUB family. As to expression, ubiquitous.

The protein is Tubby-like F-box protein 11 of Arabidopsis thaliana (Mouse-ear cress).